A 296-amino-acid polypeptide reads, in one-letter code: Morphine 6-dehydrogenase (296 aa).

An NADP(+)-binding site is contributed by 13–22 (GVKMPALGLG). Tyrosine 52 acts as the Proton donor in catalysis. Histidine 110 is a substrate binding site.

Belongs to the aldo/keto reductase family. As to quaternary structure, monomer.

The enzyme catalyses morphine + NAD(+) = morphinone + NADH + H(+). The catalysed reaction is morphine + NADP(+) = morphinone + NADPH + H(+). It participates in alkaloid degradation; codeine degradation. The protein operates within alkaloid degradation; morphine degradation. Its function is as follows. Oxidizes only the C-6 hydroxy group of morphine and codeine. This Pseudomonas putida (Arthrobacter siderocapsulatus) protein is Morphine 6-dehydrogenase (morA).